A 637-amino-acid polypeptide reads, in one-letter code: Chaperone protein HtpG (637 aa).

The a; substrate-binding stretch occupies residues 1-334 (MQDVVNSEKL…SSDLPLNISR (334 aa)). A b region spans residues 335–558 (ETLQNNKVIE…DGSMDIRMER (224 aa)). A c region spans residues 559–637 (FLREQKQLNY…MNNVLVKVYQ (79 aa)).

Belongs to the heat shock protein 90 family. Homodimer.

Its subcellular location is the cytoplasm. Molecular chaperone. Has ATPase activity. In Ehrlichia canis (strain Jake), this protein is Chaperone protein HtpG.